A 444-amino-acid chain; its full sequence is Glutamyl-tRNA reductase (444 aa).

Residues 49–52 (TCNR), Ser109, 114–116 (ETQ), and Gln120 contribute to the substrate site. Cys50 (nucleophile) is an active-site residue. 189 to 194 (GAGKMG) provides a ligand contact to NADP(+).

Belongs to the glutamyl-tRNA reductase family. In terms of assembly, homodimer.

The enzyme catalyses (S)-4-amino-5-oxopentanoate + tRNA(Glu) + NADP(+) = L-glutamyl-tRNA(Glu) + NADPH + H(+). It functions in the pathway porphyrin-containing compound metabolism; protoporphyrin-IX biosynthesis; 5-aminolevulinate from L-glutamyl-tRNA(Glu): step 1/2. In terms of biological role, catalyzes the NADPH-dependent reduction of glutamyl-tRNA(Glu) to glutamate 1-semialdehyde (GSA). The sequence is that of Glutamyl-tRNA reductase from Bacillus cereus (strain ZK / E33L).